Here is a 239-residue protein sequence, read N- to C-terminus: Pentatricopeptide repeat-containing protein DWY1, chloroplastic (239 aa).

Residues 1–35 constitute a chloroplast transit peptide; that stretch reads MALEAAFSMSFCSFSVPKAIFCERETSSFQRITSR. Disordered regions lie at residues 40–59 and 101–122; these read AGES…KETS and HISP…SGGE. Basic and acidic residues predominate over residues 111–122; it reads VRGDKPEISGGE. A type E(+) motif region spans residues 113 to 144; it reads GDKPEISGGEKKAIVDRSKAYVKLKSLGKEVR. The tract at residues 145–239 is type DYW motif; sequence DAGYVPETKY…DGNCSCGDYW (95 aa).

Belongs to the PPR family. PCMP-H subfamily. In terms of assembly, interacts with CRR4. Zn(2+) is required as a cofactor.

The protein localises to the plastid. It is found in the chloroplast. Functionally, plays a major role in single RNA editing events in chloroplasts. Acts as a site-recognition transacting factor involved in the edition of the site 1 of ndhD (ndhD-1 site corresponding to cytidine-2), which is a plastid-encoded subunit of the NADH-plastoquinone oxidoreductase. The interaction with CRR4 is required for its function in editing the ndhD-1 site. This chain is Pentatricopeptide repeat-containing protein DWY1, chloroplastic, found in Arabidopsis thaliana (Mouse-ear cress).